Consider the following 101-residue polypeptide: Protein Tat (101 aa).

The tract at residues 1-24 (MEPVDPNLEPWNHPGSQPKTACNN) is interaction with human CREBBP. Residues 1 to 48 (MEPVDPNLEPWNHPGSQPKTACNNCYCKRCSYHCLVCFQTKGLGISYG) are transactivation. The Zn(2+) site is built by C22, C25, and C27. Residues 22 to 37 (CNNCYCKRCSYHCLVC) are cysteine-rich. K28 is modified (N6-acetyllysine; by host PCAF). Residues C30, H33, C34, and C37 each coordinate Zn(2+). Residues 38 to 48 (FQTKGLGISYG) are core. The disordered stretch occupies residues 47–101 (YGRKKRRQRRSAPPSSEDHQNPIPKQPLPQTRGDQTGSEESKKKVESKTETDPFD). The Nuclear localization signal, RNA-binding (TAR), and protein transduction signature appears at 49–57 (RKKRRQRRS). Residues 49–86 (RKKRRQRRSAPPSSEDHQNPIPKQPLPQTRGDQTGSEE) form an interaction with the host capping enzyme RNGTT region. N6-acetyllysine; by host EP300 and GCN5L2 is present on residues K50 and K51. Asymmetric dimethylarginine; by host PRMT6 occurs at positions 52 and 53. Residue K71 forms a Glycyl lysine isopeptide (Lys-Gly) (interchain with G-Cter in ubiquitin) linkage. The short motif at 78 to 80 (RGD) is the Cell attachment site element. The span at 85 to 101 (EESKKKVESKTETDPFD) shows a compositional bias: basic and acidic residues.

Belongs to the lentiviruses Tat family. In terms of assembly, interacts with host CCNT1. Associates with the P-TEFb complex composed at least of Tat, P-TEFb (CDK9 and CCNT1), TAR RNA, RNA Pol II. Recruits the HATs CREBBP, TAF1/TFIID, EP300, PCAF and GCN5L2. Interacts with host KAT5/Tip60; this interaction targets the latter to degradation. Interacts with the host deacetylase SIRT1. Interacts with host capping enzyme RNGTT; this interaction stimulates RNGTT. Binds to host KDR, and to the host integrins ITGAV/ITGB3 and ITGA5/ITGB1. Interacts with host KPNB1/importin beta-1 without previous binding to KPNA1/importin alpha-1. Interacts with EIF2AK2. Interacts with host nucleosome assembly protein NAP1L1; this interaction may be required for the transport of Tat within the nucleus, since the two proteins interact at the nuclear rim. Interacts with host C1QBP/SF2P32; this interaction involves lysine-acetylated Tat. Interacts with the host chemokine receptors CCR2, CCR3 and CXCR4. Interacts with host DPP4/CD26; this interaction may trigger an anti-proliferative effect. Interacts with host LDLR. Interacts with the host extracellular matrix metalloproteinase MMP1. Interacts with host PRMT6; this interaction mediates Tat's methylation. Interacts with, and is ubiquitinated by MDM2/Hdm2. Interacts with host PSMC3 and HTATIP2. Interacts with STAB1; this interaction may overcome SATB1-mediated repression of IL2 and IL2RA (interleukin) in T cells by binding to the same domain than HDAC1. Interacts (when acetylated) with human CDK13, thereby increasing HIV-1 mRNA splicing and promoting the production of the doubly spliced HIV-1 protein Nef. Interacts with host TBP; this interaction modulates the activity of transcriptional pre-initiation complex. Interacts with host RELA. Interacts with host PLSCR1; this interaction negatively regulates Tat transactivation activity by altering its subcellular distribution. Asymmetrical arginine methylation by host PRMT6 seems to diminish the transactivation capacity of Tat and affects the interaction with host CCNT1. Post-translationally, acetylation by EP300, CREBBP, GCN5L2/GCN5 and PCAF regulates the transactivation activity of Tat. EP300-mediated acetylation of Lys-50 promotes dissociation of Tat from the TAR RNA through the competitive binding to PCAF's bromodomain. In addition, the non-acetylated Tat's N-terminus can also interact with PCAF. PCAF-mediated acetylation of Lys-28 enhances Tat's binding to CCNT1. Lys-50 is deacetylated by SIRT1. In terms of processing, polyubiquitination by host MDM2 does not target Tat to degradation, but activates its transactivation function and fosters interaction with CCNT1 and TAR RNA. Phosphorylated by EIF2AK2 on serine and threonine residues adjacent to the basic region important for TAR RNA binding and function. Phosphorylation of Tat by EIF2AK2 is dependent on the prior activation of EIF2AK2 by dsRNA.

It localises to the host nucleus. The protein resides in the host nucleolus. The protein localises to the host cytoplasm. It is found in the secreted. In terms of biological role, transcriptional activator that increases RNA Pol II processivity, thereby increasing the level of full-length viral transcripts. Recognizes a hairpin structure at the 5'-LTR of the nascent viral mRNAs referred to as the transactivation responsive RNA element (TAR) and recruits the cyclin T1-CDK9 complex (P-TEFb complex) that will in turn hyperphosphorylate the RNA polymerase II to allow efficient elongation. The CDK9 component of P-TEFb and other Tat-activated kinases hyperphosphorylate the C-terminus of RNA Pol II that becomes stabilized and much more processive. Other factors such as HTATSF1/Tat-SF1, SUPT5H/SPT5, and HTATIP2 are also important for Tat's function. Besides its effect on RNA Pol II processivity, Tat induces chromatin remodeling of proviral genes by recruiting the histone acetyltransferases (HATs) CREBBP, EP300 and PCAF to the chromatin. This also contributes to the increase in proviral transcription rate, especially when the provirus integrates in transcriptionally silent region of the host genome. To ensure maximal activation of the LTR, Tat mediates nuclear translocation of NF-kappa-B by interacting with host RELA. Through its interaction with host TBP, Tat may also modulate transcription initiation. Tat can reactivate a latently infected cell by penetrating in it and transactivating its LTR promoter. In the cytoplasm, Tat is thought to act as a translational activator of HIV-1 mRNAs. Its function is as follows. Extracellular circulating Tat can be endocytosed by surrounding uninfected cells via the binding to several surface receptors such as CD26, CXCR4, heparan sulfate proteoglycans (HSPG) or LDLR. Neurons are rarely infected, but they internalize Tat via their LDLR. Through its interaction with nuclear HATs, Tat is potentially able to control the acetylation-dependent cellular gene expression. Modulates the expression of many cellular genes involved in cell survival, proliferation or in coding for cytokines or cytokine receptors. Tat plays a role in T-cell and neurons apoptosis. Tat induced neurotoxicity and apoptosis probably contribute to neuroAIDS. Circulating Tat also acts as a chemokine-like and/or growth factor-like molecule that binds to specific receptors on the surface of the cells, affecting many cellular pathways. In the vascular system, Tat binds to ITGAV/ITGB3 and ITGA5/ITGB1 integrins dimers at the surface of endothelial cells and competes with bFGF for heparin-binding sites, leading to an excess of soluble bFGF. The protein is Protein Tat of Human immunodeficiency virus type 1 group M subtype C (isolate 92BR025) (HIV-1).